A 433-amino-acid polypeptide reads, in one-letter code: DNA methyltransferase 1-associated protein 1 (433 aa).

The required for nuclear localization stretch occupies residues 1–204; the sequence is MSADVRDILD…EVVALLAKAK (204 aa). The region spanning 148 to 197 is the Myb-like domain; sequence NNWSKVQTDHLFDLARRFDLRFIVMADRWNRQQHGTKTVEELKERYYEVV. Residues 186 to 281 adopt a coiled-coil conformation; sequence VEELKERYYE…ADQQNEHASN (96 aa). Residues 252-264 show a composition bias toward basic and acidic residues; the sequence is EARKKERERKTQD. Positions 252-305 are disordered; it reads EARKKERERKTQDLQKLISQADQQNEHASNTPSTRKYEKKLHKKKVHQQPRPSR. The segment covering 268–285 has biased composition (polar residues); sequence LISQADQQNEHASNTPST. The segment covering 288–299 has biased composition (basic residues); that stretch reads YEKKLHKKKVHQ.

As to quaternary structure, interacts with Rel. Interacts with akirin and Bap55.

It is found in the nucleus. The protein localises to the cytoplasm. Involved in transcription repression and activation. Required for larvae and pupal development, and for normal innate immune responses. Involved in modulating the activation of the immune deficiency pathway (Imd), acting either downstream of, or at the level of, the NF-kappa-B factor Rel. Possibly functions with akirin to regulate Rel, and its interaction with the Brahma complex protein Bap55 suggests that it may regulate the IMD pathway at the level of chromatin remodeling. This chain is DNA methyltransferase 1-associated protein 1, found in Drosophila melanogaster (Fruit fly).